The chain runs to 267 residues: Short-chain dehydrogenase/reductase GME11361 (267 aa).

Residues I10, T36, K42, D57, N80, Y129, K133, V162, and S164 each coordinate NADP(+). Catalysis depends on Y129, which acts as the Proton acceptor. The active-site Lowers pKa of active site Tyr is the K133.

The protein belongs to the short-chain dehydrogenases/reductases (SDR) family.

It functions in the pathway secondary metabolite biosynthesis. In terms of biological role, short-chain dehydrogenase/reductase; part of the gene cluster that mediates the biosynthesis of dibenzodioxocinones such as pestalotiollide B, a novel class of inhibitors against cholesterol ester transfer protein (CEPT). The biosynthesis initiates from condensation of acetate and malonate units catalyzed by the non-reducing PKS pks8/GME11356. Pks8/GME11356 lacks a thioesterase (TE) domain, which is important to the cyclizing of the third ring of atrochrysone carboxylic acid, and the esterase GME11355 might play the role of TE and catalyzes the cyclization reaction of the C ring. The lactamase-like protein GME11357 (or other beta-lactamases in Pestalotiopsis microspora) probably hydrolyzes the thioester bond between the ACP of pks8/GME11356 and the intermediate to release atrochrysone carboxylic acid, which is spontaneously dehydrates to form endocrocin anthrone. Endocrocin anthrone is further converted to emodin via the endocrocin intermediate. Emodin is then oxidized by several enzymes such as the Baeyer-Villiger oxidase GME11358, the oxidoreductase GME11367, the short chain dehydrogenase/reductase GME11373, as well as by other oxidoreductases from the cluster, to modify the A and C rings and open the B ring, and finally yield monodictyphenone. The prenyltransferase GME11375 may catalyze the addition reaction between the C5 side chains and the carbon bone of dibenzodioxocinones. The remaining biochemical reactions to the final product dibenzodioxocinones should be methylation catalyzed by methyltransferase GME11366 and reduction and lactonization reaction catalyzed by a series of oxidordeuctases. The sequence is that of Short-chain dehydrogenase/reductase GME11361 from Pestalotiopsis microspora.